Reading from the N-terminus, the 207-residue chain is MPKVALYDMSGAQVGEIELNDSVFGIKPNQAVMFDFVKMQLANKRAGTASSKTRAEVRGGGKKPWRQKGTGRARVGSSRNPVWTKGGVAFGPRPRDFSYRLPRKVRRLAMKSALSSKVLDNNIVVLDSLTFDEPKTRLMVQTLKSLPVGKKTLVVTAYGDPNVIKSARNIPGVKPLRADFINVYDLLNYDTLLITREAVARIEEVFA.

Residues 47 to 78 (GTASSKTRAEVRGGGKKPWRQKGTGRARVGSS) form a disordered region. Positions 60–71 (GGKKPWRQKGTG) are enriched in basic residues.

It belongs to the universal ribosomal protein uL4 family. In terms of assembly, part of the 50S ribosomal subunit.

One of the primary rRNA binding proteins, this protein initially binds near the 5'-end of the 23S rRNA. It is important during the early stages of 50S assembly. It makes multiple contacts with different domains of the 23S rRNA in the assembled 50S subunit and ribosome. Functionally, forms part of the polypeptide exit tunnel. This is Large ribosomal subunit protein uL4 from Syntrophomonas wolfei subsp. wolfei (strain DSM 2245B / Goettingen).